The following is a 589-amino-acid chain: Oligo-1,6-glucosidase IMA2 (589 aa).

The active-site Nucleophile is Asp215. Glu277 functions as the Proton donor in the catalytic mechanism.

The protein belongs to the glycosyl hydrolase 13 family.

It catalyses the reaction Hydrolysis of (1-&gt;6)-alpha-D-glucosidic linkages in some oligosaccharides produced from starch and glycogen by alpha-amylase, and in isomaltose.. Its function is as follows. Alpha-glucosidase with specificity for isomaltase, methyl-alpha-glucoside, and palatinose. This chain is Oligo-1,6-glucosidase IMA2 (IMA2), found in Saccharomyces cerevisiae (strain ATCC 204508 / S288c) (Baker's yeast).